The following is a 329-amino-acid chain: Taste receptor type 2 member 102 (329 aa).

Residues 1–9 (MNMESVLHN) are Extracellular-facing. Residues 10–30 (FATVLIYVEFIFGNLSNGFIV) traverse the membrane as a helical segment. The Cytoplasmic segment spans residues 31–47 (LSNFLDWVIKQKLSLID). A helical transmembrane segment spans residues 48-68 (KILLTLAISRITLIWEIYAWF). Topologically, residues 69–85 (KSLYDPSSFLIGIEFQI) are extracellular. A helical transmembrane segment spans residues 86–108 (IYFSWVLSSHFSLWLATTLSVFY). Topologically, residues 109 to 129 (LLRIANCSWQIFLYLKWRLKQ) are cytoplasmic. Residues 130–150 (LIVGMLLGSLVFLLGNLMQSM) traverse the membrane as a helical segment. Residues 151–181 (LEERFYQYGRNTSVNTMSNDLAMWTELIFFN) are Extracellular-facing. Asn-161 carries an N-linked (GlcNAc...) asparagine glycan. A helical membrane pass occupies residues 182-202 (MAMFSVIPFTLALISFLLLIF). Residues 203-231 (SLWKHLQKMQLISRRHRDPSTKAHMNALR) are Cytoplasmic-facing. A helical transmembrane segment spans residues 232-252 (IMVSFLLLYTMHFLSLLISWI). The Extracellular portion of the chain corresponds to 253–262 (AQKHQSELAD). Residues 263-283 (IIGMITELMYPSVHSCILILG) form a helical membrane-spanning segment. The Cytoplasmic segment spans residues 284–329 (NSKLKQTSLCMLRHLRCRLKGENITIAYSNQITSFCVFCVANKSMR).

This sequence belongs to the G-protein coupled receptor T2R family.

The protein resides in the membrane. In terms of biological role, putative taste receptor which may play a role in the perception of bitterness. In Mus musculus (Mouse), this protein is Taste receptor type 2 member 102.